We begin with the raw amino-acid sequence, 306 residues long: Acetyl-coenzyme A carboxylase carboxyl transferase subunit beta (306 aa).

A CoA carboxyltransferase N-terminal domain is found at 25-294; that stretch reads LWIKDPTSGE…VVNPSNTSST (270 aa). Residues 287–296 show a composition bias toward low complexity; sequence NPSNTSSTNS. A disordered region spans residues 287 to 306; sequence NPSNTSSTNSQASLSKAEAA.

The protein belongs to the AccD/PCCB family. As to quaternary structure, acetyl-CoA carboxylase is a heterohexamer composed of biotin carboxyl carrier protein (AccB), biotin carboxylase (AccC) and two subunits each of ACCase subunit alpha (AccA) and ACCase subunit beta (AccD).

It is found in the cytoplasm. It carries out the reaction N(6)-carboxybiotinyl-L-lysyl-[protein] + acetyl-CoA = N(6)-biotinyl-L-lysyl-[protein] + malonyl-CoA. It participates in lipid metabolism; malonyl-CoA biosynthesis; malonyl-CoA from acetyl-CoA: step 1/1. Its function is as follows. Component of the acetyl coenzyme A carboxylase (ACC) complex. Biotin carboxylase (BC) catalyzes the carboxylation of biotin on its carrier protein (BCCP) and then the CO(2) group is transferred by the transcarboxylase to acetyl-CoA to form malonyl-CoA. The sequence is that of Acetyl-coenzyme A carboxylase carboxyl transferase subunit beta from Bartonella henselae (strain ATCC 49882 / DSM 28221 / CCUG 30454 / Houston 1) (Rochalimaea henselae).